A 185-amino-acid chain; its full sequence is Ribosome-recycling factor (185 aa).

Belongs to the RRF family.

The protein resides in the cytoplasm. Responsible for the release of ribosomes from messenger RNA at the termination of protein biosynthesis. May increase the efficiency of translation by recycling ribosomes from one round of translation to another. This Pseudomonas syringae pv. tomato (strain ATCC BAA-871 / DC3000) protein is Ribosome-recycling factor.